The following is a 639-amino-acid chain: Coiled-coil domain-containing protein 93 homolog (639 aa).

The tract at residues 250-275 (KLESQLSGKDGSGKDTTEAEREEEEK) is disordered. The segment covering 260–275 (GSGKDTTEAEREEEEK) has biased composition (basic and acidic residues). A coiled-coil region spans residues 332–492 (AEKLHRQKIT…KNRDISLIQR (161 aa)).

The protein belongs to the CCDC93 family.

This Dictyostelium discoideum (Social amoeba) protein is Coiled-coil domain-containing protein 93 homolog.